Here is a 273-residue protein sequence, read N- to C-terminus: Eukaryotic translation initiation factor 3 subunit G-2 (273 aa).

Residues 165-193 (KYVPPFMKDGGGGPGGKNWGRGRERDDSS) are disordered. The span at 173 to 183 (DGGGGPGGKNW) shows a compositional bias: gly residues. Residues 193 to 271 (SAVRISNLSE…LILCVEWSKP (79 aa)) enclose the RRM domain.

The protein belongs to the eIF-3 subunit G family. In terms of assembly, component of the eukaryotic translation initiation factor 3 (eIF-3) complex. The eIF-3 complex interacts with pix.

It is found in the cytoplasm. Functionally, RNA-binding component of the eukaryotic translation initiation factor 3 (eIF-3) complex, which is involved in protein synthesis of a specialized repertoire of mRNAs and, together with other initiation factors, stimulates binding of mRNA and methionyl-tRNAi to the 40S ribosome. The eIF-3 complex specifically targets and initiates translation of a subset of mRNAs involved in cell proliferation. This subunit can bind 18S rRNA. The protein is Eukaryotic translation initiation factor 3 subunit G-2 of Drosophila yakuba (Fruit fly).